The sequence spans 305 residues: Superkiller complex protein 8 (305 aa).

Residue Met1 is modified to N-acetylmethionine. Thr2 bears the N-acetylthreonine; in WD repeat-containing protein 61, N-terminally processed mark. WD repeat units lie at residues 14 to 57, 62 to 101, 104 to 143, 146 to 187, 188 to 227, 230 to 269, and 272 to 305; these read AHDD…LELQ, GHQL…QMKS, AGPV…KEYS, TRGK…HTLE, GHAM…LAGT, GHAS…CIHT, and DHQD…DCPI.

The protein belongs to the SKI8 family. As to quaternary structure, component of the PAF1 complex, which consists of CDC73, PAF1, LEO1, CTR9, RTF1 and SKIC8. The PAF1 complex interacts with PHF5A. Within the PAF1 complex interacts directly with PHF5A. Component of the SKI complex which consists of SKIC2, SKIC3 and SKIC8.

The protein resides in the nucleus. It localises to the cytoplasm. Component of the PAF1 complex (PAF1C) which has multiple functions during transcription by RNA polymerase II and is implicated in regulation of development and maintenance of embryonic stem cell pluripotency. PAF1C associates with RNA polymerase II through interaction with POLR2A CTD non-phosphorylated and 'Ser-2'- and 'Ser-5'-phosphorylated forms and is involved in transcriptional elongation, acting both independently and synergistically with TCEA1 and in cooperation with the DSIF complex and HTATSF1. PAF1C is required for transcription of Hox and Wnt target genes. PAF1C is involved in hematopoiesis and stimulates transcriptional activity of KMT2A/MLL1; it promotes leukemogenesis through association with KMT2A/MLL1-rearranged oncoproteins, such as KMT2A/MLL1-MLLT3/AF9 and KMT2A/MLL1-MLLT1/ENL. PAF1C is involved in histone modifications such as ubiquitination of histone H2B and methylation on histone H3 'Lys-4' (H3K4me3). PAF1C recruits the RNF20/40 E3 ubiquitin-protein ligase complex and the E2 enzyme UBE2A or UBE2B to chromatin which mediate monoubiquitination of 'Lys-120' of histone H2B (H2BK120ub1); UB2A/B-mediated H2B ubiquitination is proposed to be coupled to transcription. PAF1C is involved in mRNA 3' end formation probably through association with cleavage and poly(A) factors. In case of infection by influenza A strain H3N2, PAF1C associates with viral NS1 protein, thereby regulating gene transcription. Required for mono- and trimethylation on histone H3 'Lys-4' (H3K4me3), dimethylation on histone H3 'Lys-79' (H3K4me3). Required for Hox gene transcription. Also acts as a component of the SKI complex, a multiprotein complex that assists the RNA-degrading exosome during the mRNA decay and quality-control pathways. The SKI complex catalyzes mRNA extraction from 80S ribosomal complexes in the 3'-5' direction and channels mRNA to the cytosolic exosome for degradation. SKI-mediated extraction of mRNA from stalled ribosomes allow binding of the Pelota-HBS1L complex and subsequent ribosome disassembly by ABCE1 for ribosome recycling. The polypeptide is Superkiller complex protein 8 (Skic8) (Rattus norvegicus (Rat)).